The primary structure comprises 101 residues: Interleukin-8 (101 aa).

An N-terminal signal peptide occupies residues 1–22 (MTSKLAVALLAAFLLSAALCEG). Arginine 27 is modified (citrulline). 2 disulfides stabilise this stretch: cysteine 34/cysteine 61 and cysteine 36/cysteine 77.

It belongs to the intercrine alpha (chemokine CxC) family. In terms of assembly, homodimer. Interacts with TNFAIP6 (via Link domain); this interaction interferes with chemokine binding to glycosaminoglycans. In terms of processing, citrullination at Arg-27 prevents proteolysis, and dampens tissue inflammation, it also enhances leukocytosis, possibly through impaired chemokine clearance from the blood circulation.

The protein resides in the secreted. Chemotactic factor that mediates inflammatory response by attracting neutrophils, basophils, and T-cells to clear pathogens and protect the host from infection. Also plays an important role in neutrophil activation. Released in response to an inflammatory stimulus, exerts its effect by binding to the G-protein-coupled receptors CXCR1 and CXCR2, primarily found in neutrophils, monocytes and endothelial cells. G-protein heterotrimer (alpha, beta, gamma subunits) constitutively binds to CXCR1/CXCR2 receptor and activation by IL8 leads to beta and gamma subunits release from Galpha (GNAI2 in neutrophils) and activation of several downstream signaling pathways including PI3K and MAPK pathways. In Cercocebus atys (Sooty mangabey), this protein is Interleukin-8 (CXCL8).